A 309-amino-acid polypeptide reads, in one-letter code: Aspartate carbamoyltransferase catalytic subunit (309 aa).

Positions 55 and 56 each coordinate carbamoyl phosphate. Lys85 contributes to the L-aspartate binding site. Carbamoyl phosphate contacts are provided by Arg106, His135, and Gln138. 2 residues coordinate L-aspartate: Arg168 and Arg230. The carbamoyl phosphate site is built by Leu268 and Pro269.

The protein belongs to the aspartate/ornithine carbamoyltransferase superfamily. ATCase family. In terms of assembly, heterododecamer (2C3:3R2) of six catalytic PyrB chains organized as two trimers (C3), and six regulatory PyrI chains organized as three dimers (R2).

It carries out the reaction carbamoyl phosphate + L-aspartate = N-carbamoyl-L-aspartate + phosphate + H(+). It participates in pyrimidine metabolism; UMP biosynthesis via de novo pathway; (S)-dihydroorotate from bicarbonate: step 2/3. In terms of biological role, catalyzes the condensation of carbamoyl phosphate and aspartate to form carbamoyl aspartate and inorganic phosphate, the committed step in the de novo pyrimidine nucleotide biosynthesis pathway. This chain is Aspartate carbamoyltransferase catalytic subunit, found in Vibrio campbellii (strain ATCC BAA-1116).